Here is a 214-residue protein sequence, read N- to C-terminus: Thymidylate kinase (214 aa).

An ATP-binding site is contributed by 10-17; sequence GPDGAGKT.

The protein belongs to the thymidylate kinase family.

It carries out the reaction dTMP + ATP = dTDP + ADP. Phosphorylation of dTMP to form dTDP in both de novo and salvage pathways of dTTP synthesis. This Lacticaseibacillus casei (strain BL23) (Lactobacillus casei) protein is Thymidylate kinase.